The following is a 297-amino-acid chain: Mitochondrial nicotinamide adenine dinucleotide transporter SLC25A51 (297 aa).

A compositionally biased stretch (basic and acidic residues) spans Met1 to Pro11. The interval Met1–Asp20 is disordered. Solcar repeat units follow at residues Val28 to Leu108, Pro116 to His200, and Asn213 to Val296. 6 helical membrane-spanning segments follow: residues Cys36–Phe56, Leu85–Leu105, Pro116–Phe135, Ile179–Glu199, Phe215–Val235, and Leu268–Thr289.

Belongs to the mitochondrial carrier (TC 2.A.29) family.

It is found in the mitochondrion inner membrane. It carries out the reaction NAD(+)(in) = NAD(+)(out). Its function is as follows. Mitochondrial membrane carrier protein that mediates the import of NAD(+) into mitochondria. Mitochondrial NAD(+) is required for glycolysis and mitochondrial respiration. Compared to SLC25A52, SLC25A51-mediated transport is essential for the import of NAD(+) in mitochondria. The transport mechanism, uniport or antiport, its electrogenicity and substrate selectivity, remain to be elucidated. This Homo sapiens (Human) protein is Mitochondrial nicotinamide adenine dinucleotide transporter SLC25A51.